The chain runs to 808 residues: Genome polyprotein (808 aa).

Residues 34-55 (TAEVGSHQPEPLKTSVDKPGSK) form a disordered region. 2 short sequence motifs ((L)YPX(n)L motif) span residues 146-150 (YPHGL) and 179-184 (YPVWEL).

This sequence belongs to the picornaviridae polyprotein family. Homopentamer. Homooligomer. In terms of assembly, interacts with capsid protein VP2. Interacts with capsid protein VP3. As to quaternary structure, interacts with capsid protein VP1. Interacts with capsid protein VP3. Interacts with capsid protein VP1. Interacts with capsid protein VP2. In terms of processing, specific enzymatic cleavages by viral protease in vivo yield a variety of precursors and mature proteins. Polyprotein processing intermediates are produced, such as P1-2A which is a functional precursor of the structural proteins, VP0 which is a VP4-VP2 precursor, VP1-2A precursor, 3ABC precursor which is a stable and catalytically active precursor of 3A, 3B and 3C proteins, 3AB and 3CD precursors. The assembly signal 2A is removed from VP1-2A by a host protease, possibly host Cathepsin L. This cleavage occurs over a region of 3 amino-acids probably generating VP1 proteins with heterogeneous C-termini. During virion maturation, immature virions are rendered infectious following cleavage of VP0 into VP4 and VP2. This maturation seems to be an autocatalytic event triggered by the presence of RNA in the capsid and is followed by a conformational change of the particle. Post-translationally, the assembly signal 2A is removed from VP1-2A by a host protease, possibly host Cathepsin L in naked virions. This cleavage does not occur in enveloped virions. This cleavage occurs over a region of 3 amino-acids probably generating VP1 proteins with heterogeneous C-termini. In terms of processing, unlike other picornaviruses, does not seem to be myristoylated.

It localises to the virion. Its subcellular location is the host endosome. The protein localises to the host multivesicular body. Its function is as follows. Capsid proteins VP1, VP2, and VP3 form a closed capsid enclosing the viral positive strand RNA genome. All these proteins contain a beta-sheet structure called beta-barrel jelly roll. Together they form an icosahedral capsid (T=3) composed of 60 copies of each VP1, VP2, and VP3, with a diameter of approximately 300 Angstroms. VP1 is situated at the 12 fivefold axes, whereas VP2 and VP3 are located at the quasi-sixfold axes. The naked capsid interacts with the host receptor HAVCR1 to provide virion attachment to and probably entry into the target cell. VP0 precursor is a component of the immature procapsids. Functionally, plays a role in the assembly of the 12 pentamers into an icosahedral structure. Has not been detected in mature virions, supposedly owing to its small size. In terms of biological role, precursor component of immature procapsids that corresponds to an extended form of the structural protein VP1. After maturation, possibly by the host Cathepsin L, the assembly signal 2A is cleaved to give rise to the mature VP1 protein. The chain is Genome polyprotein from Human hepatitis A virus genotype IIIA (isolate GA76) (HHAV).